The following is a 149-amino-acid chain: UPF0178 protein Psyc_0274 (149 aa).

It belongs to the UPF0178 family.

The chain is UPF0178 protein Psyc_0274 from Psychrobacter arcticus (strain DSM 17307 / VKM B-2377 / 273-4).